A 381-amino-acid polypeptide reads, in one-letter code: 3-hydroxyisobutyryl-CoA hydrolase, mitochondrial (381 aa).

Residues 1 to 25 (MDRLLTISNHIGKNIRQFSTSTEEV) constitute a mitochondrion transit peptide. Positions 116, 141, 164, and 172 each coordinate substrate.

Belongs to the enoyl-CoA hydratase/isomerase family.

The protein resides in the mitochondrion. The enzyme catalyses 3-hydroxy-2-methylpropanoyl-CoA + H2O = 3-hydroxy-2-methylpropanoate + CoA + H(+). It participates in amino-acid degradation; L-valine degradation. Hydrolyzes 3-hydroxyisobutyryl-CoA (HIBYL-CoA), a saline catabolite. This chain is 3-hydroxyisobutyryl-CoA hydrolase, mitochondrial (hibch), found in Dictyostelium discoideum (Social amoeba).